We begin with the raw amino-acid sequence, 179 residues long: Vi polysaccharide biosynthesis protein TviA (179 aa).

The protein operates within glycan metabolism; Vi-antigen biosynthesis. It participates in capsule biogenesis; capsule polysaccharide biosynthesis. The sequence is that of Vi polysaccharide biosynthesis protein TviA (tviA) from Salmonella typhi.